The sequence spans 304 residues: Undecaprenyl-diphosphatase (304 aa).

The next 8 membrane-spanning stretches (helical) occupy residues 5–25 (FLFI…EFVP), 47–67 (GFPE…VVVL), 72–92 (ISSS…LKTS), 111–131 (FGIN…LFHD), 137–157 (LFST…LIVI), 209–231 (ISGL…AMVG), 248–268 (TNWI…LVVI), and 283–303 (FAIY…TKVI).

The protein belongs to the UppP family.

It localises to the cell membrane. It carries out the reaction di-trans,octa-cis-undecaprenyl diphosphate + H2O = di-trans,octa-cis-undecaprenyl phosphate + phosphate + H(+). Its function is as follows. Catalyzes the dephosphorylation of undecaprenyl diphosphate (UPP). Confers resistance to bacitracin. In Clostridium perfringens (strain ATCC 13124 / DSM 756 / JCM 1290 / NCIMB 6125 / NCTC 8237 / Type A), this protein is Undecaprenyl-diphosphatase.